Here is a 132-residue protein sequence, read N- to C-terminus: Cytochrome b5 (132 aa).

The 77-residue stretch at 2–78 folds into the Cytochrome b5 heme-binding domain; sequence GKIFTLAEVA…LDEYYVGDID (77 aa). 2 residues coordinate heme: His-37 and His-61. A helical transmembrane segment spans residues 104–124; it reads FVIKLLQFLVPLVILAGAIGI.

Belongs to the cytochrome b5 family.

It is found in the endoplasmic reticulum membrane. The protein localises to the microsome membrane. Its function is as follows. Membrane bound hemoprotein which function as an electron carrier for several membrane bound oxygenases. This is Cytochrome b5 from Borago officinalis (Bourrache).